Consider the following 262-residue polypeptide: uncharacterized protein (262 aa).

An N-terminal signal peptide occupies residues 1-22; sequence MGYLKRFALYISVMILIFAIAG. A lipid anchor (N-palmitoyl cysteine) is attached at cysteine 23. Cysteine 23 carries S-diacylglycerol cysteine lipidation.

The protein belongs to the staphylococcal tandem lipoprotein family.

The protein localises to the cell membrane. This is an uncharacterized protein from Staphylococcus aureus (strain NCTC 8325 / PS 47).